Reading from the N-terminus, the 419-residue chain is Sphingomyelin phosphodiesterase 2 (419 aa).

Glutamate 49 is a binding site for Mg(2+). Histidine 272 (proton acceptor) is an active-site residue. Helical transmembrane passes span 326-346 (FSGYVIVWGLSLLVLLCVLAA) and 354-374 (AIILCIPSVGLVLVAGAVYLF).

The protein belongs to the neutral sphingomyelinase family. The cofactor is Mg(2+). As to expression, although widely expressed in all tissues examined, except the spleen, high enzymatic activity occurs only in the brain.

It is found in the cell membrane. The catalysed reaction is a sphingomyelin + H2O = phosphocholine + an N-acylsphing-4-enine + H(+). The enzyme catalyses an N-(acyl)-sphingosylphosphocholine + H2O = an N-acyl-sphingoid base + phosphocholine + H(+). It catalyses the reaction 1-O-octadecyl-sn-glycero-3-phosphocholine + H2O = 1-O-octadecyl-sn-glycerol + phosphocholine + H(+). It carries out the reaction 1-hexadecanoyl-sn-glycero-3-phosphocholine + H2O = 1-hexadecanoyl-sn-glycerol + phosphocholine + H(+). The catalysed reaction is a sphingosylphosphocholine + H2O = a sphingoid base + phosphocholine + H(+). The enzyme catalyses 1-O-hexadecyl-sn-glycero-3-phosphocholine + H2O = 1-O-hexadecyl-sn-glycerol + phosphocholine + H(+). The protein operates within lipid metabolism; sphingolipid metabolism. Its activity is regulated as follows. Activated by arachidonic acid. Catalyzes, at least in vitro, the hydrolysis of sphingomyelin to form ceramide and phosphocholine. Also hydrolyzes 1-O-alkyl-2-lyso-sn-glycero-3-phosphocholine (lyso-platelet-activating factor) in vivo. Also acts on 1-acyl-2-lyso-sn-glycero-3-phosphocholine (lyso-PC) and sphingosylphosphocholine. The chain is Sphingomyelin phosphodiesterase 2 from Mus musculus (Mouse).